A 456-amino-acid chain; its full sequence is MKKHTGTIISISGFVLRIEFNESELPEIGFALEYHTHQGTYLAEVVQHTGINTVSAIAIGEVSGLARGTEVVNLGHPIEVPVGETVQGRMLNVYGKAIDGKPEPAAEVKWPIFRAQPLLRELDTNKEILYTGIKVIDLICPILKGGKTGLFGGAGVGKSVLMQELINNISMLGGNSVFTGVGERVREGIGLYKELEASGVLPQTTVVLGQMNESPGVRMRVALTGLTIAEYLRDEEKKDVLLFIDNVFRFIQAGSEVSSLQGKIPITGGYQSTLSKEVGDFQDRIASTKNGSITSIQCVFLPADDIDDPSAVATFSHLDSTIVLERSIAALGIFPAVNPLQSFSRALNPTFVGERHYQLAVQVKFILQRYMELQEIINVLGMAELSDEDRKLVHRARKIRNFLSQPFYVSEKFTGTEGTFVEIEDLLGSIERILNGDYDERSERDFLFIGSYKDLK.

152–159 (GGAGVGKS) contacts ATP.

It belongs to the ATPase alpha/beta chains family. F-type ATPases have 2 components, CF(1) - the catalytic core - and CF(0) - the membrane proton channel. CF(1) has five subunits: alpha(3), beta(3), gamma(1), delta(1), epsilon(1). CF(0) has three main subunits: a(1), b(2) and c(9-12). The alpha and beta chains form an alternating ring which encloses part of the gamma chain. CF(1) is attached to CF(0) by a central stalk formed by the gamma and epsilon chains, while a peripheral stalk is formed by the delta and b chains.

Its subcellular location is the cell membrane. The enzyme catalyses ATP + H2O + 4 H(+)(in) = ADP + phosphate + 5 H(+)(out). Produces ATP from ADP in the presence of a proton gradient across the membrane. The catalytic sites are hosted primarily by the beta subunits. The protein is ATP synthase subunit beta 1 of Listeria monocytogenes serovar 1/2a (strain ATCC BAA-679 / EGD-e).